The following is a 497-amino-acid chain: NAD(P)H-quinone oxidoreductase chain 4, chloroplastic (497 aa).

Transmembrane regions (helical) follow at residues 5–25 (VPWL…IPIL), 36–56 (YTLG…YCHF), 88–108 (LGLV…AWPI), 112–132 (TRLF…LFVS), 135–155 (ILLF…LLCL), 168–188 (FVLY…TMSF), 212–232 (VLIY…FPFH), 243–263 (HYST…YGLI), 275–295 (FLLG…ASLI), 306–326 (IAYS…SFTE), 331–351 (GAIL…FLAG), 387–407 (LALP…GVVT), 418–438 (GITV…LSML), and 463–483 (LFIL…PNLI).

It belongs to the complex I subunit 4 family.

Its subcellular location is the plastid. It localises to the chloroplast thylakoid membrane. The catalysed reaction is a plastoquinone + NADH + (n+1) H(+)(in) = a plastoquinol + NAD(+) + n H(+)(out). The enzyme catalyses a plastoquinone + NADPH + (n+1) H(+)(in) = a plastoquinol + NADP(+) + n H(+)(out). This is NAD(P)H-quinone oxidoreductase chain 4, chloroplastic from Adiantum capillus-veneris (Maidenhair fern).